An 842-amino-acid polypeptide reads, in one-letter code: G-type lectin S-receptor-like serine/threonine-protein kinase At1g11330 (842 aa).

Residues 1-29 (MVVSVTIRRRFVLLLLACTCLLSRRLCFG) form the signal peptide. Topologically, residues 30-444 (EDRITFSSPI…AHSELKTHSN (415 aa)) are extracellular. Residues 32–157 (RITFSSPIKD…RNNGEILWES (126 aa)) enclose the Bulb-type lectin domain. N-linked (GlcNAc...) asparagine glycosylation is found at Asn63, Asn94, Asn122, Asn130, Asn196, and Asn260. Residues 294–330 (PYTDCDAYGRCGRFGSCHAGENPPCKCVKGFVPKNNT) form the EGF-like; atypical domain. Cystine bridges form between Cys298–Cys310 and Cys304–Cys318. Residues Asn328, Asn336, Asn354, and Asn396 are each glycosylated (N-linked (GlcNAc...) asparagine). Residues 349–435 (CERQRNVSNG…SGIDLFIRVA (87 aa)) enclose the PAN domain. 2 disulfides stabilise this stretch: Cys389/Cys410 and Cys393/Cys399. Residues 445–465 (LAVMIAAPVIGVMLIAAVCVL) form a helical membrane-spanning segment. The Cytoplasmic segment spans residues 466 to 842 (LACRKYKKRP…DVSLTAVTGR (377 aa)). In terms of domain architecture, Protein kinase spans 524–810 (FSLRNKLGQG…SLADPKQPAF (287 aa)). Residues 530 to 538 (LGQGGFGPV) and Lys552 each bind ATP. 2 positions are modified to phosphoserine: Ser558 and Ser573. The caM-binding stretch occupies residues 613–630 (MKQKILDWKTRFNIMEGI). The Proton acceptor role is filled by Asp649. Phosphoserine occurs at positions 653 and 666. Thr683 is modified (phosphothreonine). Ser726, Ser727, Ser821, and Ser830 each carry phosphoserine. Residues 814 to 842 (RGASEAESSDQSSQKVSINDVSLTAVTGR) form a disordered region. Low complexity predominate over residues 818 to 827 (EAESSDQSSQ). Residues 828-842 (KVSINDVSLTAVTGR) are compositionally biased toward polar residues. Residue Thr837 is modified to Phosphothreonine.

This sequence belongs to the protein kinase superfamily. Ser/Thr protein kinase family.

The protein resides in the cell membrane. It catalyses the reaction L-seryl-[protein] + ATP = O-phospho-L-seryl-[protein] + ADP + H(+). The catalysed reaction is L-threonyl-[protein] + ATP = O-phospho-L-threonyl-[protein] + ADP + H(+). This chain is G-type lectin S-receptor-like serine/threonine-protein kinase At1g11330, found in Arabidopsis thaliana (Mouse-ear cress).